The primary structure comprises 504 residues: Maturase K (504 aa).

Belongs to the intron maturase 2 family. MatK subfamily.

It is found in the plastid. The protein localises to the chloroplast. Usually encoded in the trnK tRNA gene intron. Probably assists in splicing its own and other chloroplast group II introns. This chain is Maturase K, found in Turritis glabra (Tower mustard).